The primary structure comprises 624 residues: tRNA uridine 5-carboxymethylaminomethyl modification enzyme MnmG (624 aa).

Residues 13–18 (GGGHAG), valine 125, and serine 180 contribute to the FAD site. 273–287 (GPRYCPSIEDKIVRF) is an NAD(+) binding site. Position 370 (glutamine 370) interacts with FAD.

Belongs to the MnmG family. In terms of assembly, homodimer. Heterotetramer of two MnmE and two MnmG subunits. The cofactor is FAD.

Its subcellular location is the cytoplasm. Its function is as follows. NAD-binding protein involved in the addition of a carboxymethylaminomethyl (cmnm) group at the wobble position (U34) of certain tRNAs, forming tRNA-cmnm(5)s(2)U34. This chain is tRNA uridine 5-carboxymethylaminomethyl modification enzyme MnmG, found in Legionella pneumophila subsp. pneumophila (strain Philadelphia 1 / ATCC 33152 / DSM 7513).